Reading from the N-terminus, the 313-residue chain is L-lactate dehydrogenase (313 aa).

NAD(+) contacts are provided by residues valine 11, aspartate 32, arginine 37, tyrosine 62, and 76 to 77; that span reads GV. Residues glutamine 79, arginine 85, and 117–120 contribute to the substrate site; that span reads NPVD. Residues 115-117 and serine 143 contribute to the NAD(+) site; that span reads ASN. 148 to 151 is a substrate binding site; that stretch reads DTAR. 2 residues coordinate beta-D-fructose 1,6-bisphosphate: arginine 153 and histidine 168. Residue histidine 175 is the Proton acceptor of the active site. Tyrosine 221 is modified (phosphotyrosine). A substrate-binding site is contributed by threonine 230.

This sequence belongs to the LDH/MDH superfamily. LDH family. Homotetramer.

The protein resides in the cytoplasm. It carries out the reaction (S)-lactate + NAD(+) = pyruvate + NADH + H(+). It functions in the pathway fermentation; pyruvate fermentation to lactate; (S)-lactate from pyruvate: step 1/1. Allosterically activated by fructose 1,6-bisphosphate (FBP). Its function is as follows. Catalyzes the conversion of lactate to pyruvate. The sequence is that of L-lactate dehydrogenase from Geotalea daltonii (strain DSM 22248 / JCM 15807 / FRC-32) (Geobacter daltonii).